We begin with the raw amino-acid sequence, 145 residues long: uncharacterized protein (145 aa).

This sequence belongs to the asfivirus K145R family.

It localises to the virion. This is an uncharacterized protein from Ornithodoros (relapsing fever ticks).